The sequence spans 275 residues: NH(3)-dependent NAD(+) synthetase (275 aa).

Position 46–53 (46–53 (GISGGQDS)) interacts with ATP. Asp52 provides a ligand contact to Mg(2+). Residue Arg140 coordinates deamido-NAD(+). Thr160 contributes to the ATP binding site. Position 165 (Glu165) interacts with Mg(2+). Deamido-NAD(+) is bound by residues Lys173 and Asp180. ATP-binding residues include Lys189 and Thr211. Deamido-NAD(+) is bound at residue 260–261 (HK).

Belongs to the NAD synthetase family. In terms of assembly, homodimer.

The catalysed reaction is deamido-NAD(+) + NH4(+) + ATP = AMP + diphosphate + NAD(+) + H(+). It functions in the pathway cofactor biosynthesis; NAD(+) biosynthesis; NAD(+) from deamido-NAD(+) (ammonia route): step 1/1. In terms of biological role, catalyzes the ATP-dependent amidation of deamido-NAD to form NAD. Uses ammonia as a nitrogen source. The sequence is that of NH(3)-dependent NAD(+) synthetase from Shigella boydii serotype 18 (strain CDC 3083-94 / BS512).